The following is a 487-amino-acid chain: MSETGSNEIKQWTLEPETEYRFELDPGTSLAIKLIQGNAEVFGAELAEGKHYLFGSECKAAVFTWQGCTIEMRHPSTEYVSEETPMAAYANLHIAFEQMRVRALAKFHGSPLPPGDEPPTAPEPPRVLVLGPENSGKTTVCKILTNYAVRAGQNWSPLLVNVDPSEGAWSAPGALSIAPVHGPIPTYSPANPLGSAATSAPMAMSSNALLPVVYWYGHPDTKRNPLLMDRLIRNLGENVNDRFELDQEGRSSGVIVDTPSSFASSSTSNDHRQKLIKACMDAFRINVILVVGHEKLNVEMQRAYSSYVTVVKIPKSGGVVELDHSYRERVHNYQLHTYMYGQVIQAPPGISNATLGGESLTDLVLSPSSSVIKFEDLSIFRIGAETMAPSSALPIGATRVVSEMQPVPVDPSQPGSGLLNAVLALLAPQNPDENERYDEEILDLTVSGFLIVTNLGMQQRKMTILAPNQGSVVGKTAIMGSFEWQEQ.

ATP-binding positions include Glu-19, Lys-59, and 134-139 (NSGKTT).

This sequence belongs to the Clp1 family. Clp1 subfamily. Component of a pre-mRNA cleavage factor complex. Interacts directly with PCF11.

The protein resides in the nucleus. Functionally, required for endonucleolytic cleavage during polyadenylation-dependent pre-mRNA 3'-end formation. In Laccaria bicolor (strain S238N-H82 / ATCC MYA-4686) (Bicoloured deceiver), this protein is mRNA cleavage and polyadenylation factor CLP1.